A 238-amino-acid chain; its full sequence is MSEVTTAEFNEEGKYLRKIRSFVLREGRLTKGQAQAIESQWPTMGLDYSPTPLVLSDVFGREADTVLEIGFGMGASLVQMAKDAPAQNFIGIEVHKPGVGSCLSDAAIAGVTNLRVYHHDAMEVLEHAIADGSLARVQLFFPDPWHKKRHHKRRIVQAEFAELIRRKLKIGGVFHIATDWEEYSEHMLEVMQAAPGYKNQSSDGTVVPRPDHRPLTKFEARGHRLGHGVWDLMFERIA.

S-adenosyl-L-methionine is bound by residues Glu68, Glu93, Asp120, and Asp143. Asp143 is a catalytic residue. Substrate contacts are provided by residues Lys147, Asp179, and 216–219; that span reads TKFE.

Belongs to the class I-like SAM-binding methyltransferase superfamily. TrmB family.

It carries out the reaction guanosine(46) in tRNA + S-adenosyl-L-methionine = N(7)-methylguanosine(46) in tRNA + S-adenosyl-L-homocysteine. Its pathway is tRNA modification; N(7)-methylguanine-tRNA biosynthesis. Functionally, catalyzes the formation of N(7)-methylguanine at position 46 (m7G46) in tRNA. This chain is tRNA (guanine-N(7)-)-methyltransferase, found in Shewanella baltica (strain OS195).